A 299-amino-acid polypeptide reads, in one-letter code: Protein N-terminal and lysine N-methyltransferase EFM7 (299 aa).

S-adenosyl-L-methionine is bound by residues tryptophan 74, 100–102 (GAG), aspartate 122, tryptophan 155, and serine 178.

It belongs to the class I-like SAM-binding methyltransferase superfamily. EFM7 family.

Its subcellular location is the cytoplasm. S-adenosyl-L-methionine-dependent protein methyltransferase that trimethylates the N-terminal glycine 'Gly-2' of elongation factor 1-alpha, before also catalyzing the mono- and dimethylation of 'Lys-3'. The chain is Protein N-terminal and lysine N-methyltransferase EFM7 from Cryptococcus neoformans var. neoformans serotype D (strain B-3501A) (Filobasidiella neoformans).